The following is a 250-amino-acid chain: 5-oxoprolinase subunit A 2 (250 aa).

Belongs to the LamB/PxpA family. In terms of assembly, forms a complex composed of PxpA, PxpB and PxpC.

It carries out the reaction 5-oxo-L-proline + ATP + 2 H2O = L-glutamate + ADP + phosphate + H(+). Its function is as follows. Catalyzes the cleavage of 5-oxoproline to form L-glutamate coupled to the hydrolysis of ATP to ADP and inorganic phosphate. The chain is 5-oxoprolinase subunit A 2 from Bordetella bronchiseptica (strain ATCC BAA-588 / NCTC 13252 / RB50) (Alcaligenes bronchisepticus).